Reading from the N-terminus, the 1063-residue chain is Structural polyprotein (1063 aa).

The segment at 23 to 131 (LRAELAAGAS…LGPPTNPFQA (109 aa)) is disordered. Residues 30–69 (GASQLRRPRPPRQRDSSTSGDDSGRDSGGPRRRRGNRGRG) form a human C1QBP/SF2P32-binding region. At S46 the chain carries Phosphoserine; by host. Over residues 59–69 (PRRRRGNRGRG) the composition is skewed to basic residues. The span at 70–87 (QRKDWSKAPPPPEERQES) shows a compositional bias: basic and acidic residues. The segment covering 93 to 107 (VPKPPRAPPQPPQPP) has biased composition (pro residues). Residues C153 and C197 are joined by a disulfide bond. The tract at residues 279–300 (GAPQVFLAGLLLAAVAVGTARA) is functions as E2 signal peptide. Residues 301–534 (GLQPRTDIAA…LWLATANALS (234 aa)) lie on the Extracellular side of the membrane. Positions 305–327 (RTDIAAPPAPPQAPRAHGKHYGH) are disordered. N-linked (GlcNAc...) asparagine; by host glycosylation is found at N353, N371, N410, and N429. Residues 535-555 (LDHALAAVVLLVPWVLIFMLC) form a helical membrane-spanning segment. Residues 556-582 (RRACRRRGAAAALTAVVLQGYNPPAYG) are Cytoplasmic-facing. Residues 562–582 (RGAAAALTAVVLQGYNPPAYG) are functions as E1 signal peptide. The Extracellular segment spans residues 583 to 1028 (EEAFTYLCTA…QTWAEWAAAH (446 aa)). 8 cysteine pairs are disulfide-bonded: C590–C595, C619–C824, C641–C653, C699–C712, C758–C767, C807–C817, C931–C934, and C950–C983. N-linked (GlcNAc...) asparagine; by host glycosylation is present at N658. Residues N670 and A671 each coordinate Ca(2+). Positions 718 and 719 each coordinate Ca(2+). 2 N-linked (GlcNAc...) asparagine; by host glycosylation sites follow: N759 and N791. Residues T1011 and T1012 are each glycosylated (O-linked (GalNAc...) threonine; by host). A helical transmembrane segment spans residues 1029 to 1049 (WWQLTLGAICALLLAGLLACC). Topologically, residues 1050 to 1063 (AKCLYHLRGAIAPR) are extracellular.

As to quaternary structure, homodimer; further assembles into homooligomer. Interacts with human C1QBP. Interacts (via N-terminus) with protease/methyltransferase p150. Heterodimer with spike glycoprotein E2. In terms of assembly, heterodimer with spike glycoprotein E1. Structural polyprotein: Specific enzymatic cleavages in vivo yield mature proteins. Two signal peptidase-mediated cleavages within the polyprotein produce the structural proteins capsid, E2, and E1. The E2 signal peptide remains attached to the C-terminus of the capsid protein after cleavage by the signal peptidase. Another signal peptide at E2 C-terminus directs E1 to the ER, with a similar mechanism. In terms of processing, contains three N-linked oligosaccharides. Post-translationally, capsid is phosphorylated on Ser-46 by host. This phosphorylation negatively regulates capsid protein RNA-binding activity. Dephosphorylated by human PP1A.

It is found in the virion. Its subcellular location is the host cytoplasm. It localises to the host mitochondrion. The protein localises to the virion membrane. The protein resides in the host Golgi apparatus membrane. Capsid protein interacts with genomic RNA and assembles into icosahedric core particles 65-70 nm in diameter. The resulting nucleocapsid eventually associates with the cytoplasmic domain of E2 at the cell membrane, leading to budding and formation of mature virions from host Golgi membranes. Phosphorylation negatively regulates RNA-binding activity, possibly delaying virion assembly during the viral replication phase. Capsid protein dimerizes and becomes disulfide-linked in the virion. Modulates genomic RNA replication. Modulates subgenomic RNA synthesis by interacting with human C1QBP/SF2P32. Induces both perinuclear clustering of mitochondria and the formation of electron-dense intermitochondrial plaques, both hallmarks of rubella virus infected cells. Induces apoptosis when expressed in transfected cells. Its function is as follows. Responsible for viral attachment to target host cell, by binding to the cell receptor. Its transport to the plasma membrane depends on interaction with E1 protein. The surface glycoproteins display an irregular helical organization and a pseudo-tetrameric inner nucleocapsid arrangement. In terms of biological role, class II viral fusion protein. Fusion activity is inactive as long as E1 is bound to E2 in mature virion. After virus attachment to target cell and clathrin-mediated endocytosis, acidification of the endosome would induce dissociation of E1/E2 heterodimer and concomitant trimerization of the E1 subunits. This E1 homotrimer is fusion active, and promotes release of viral nucleocapsid in cytoplasm after endosome and viral membrane fusion. The cytoplasmic tail of spike glycoprotein E1 modulates virus release. The surface glycoproteins display an irregular helical organization and a pseudo-tetrameric inner nucleocapsid arrangement. This is Structural polyprotein from Homo sapiens (Human).